The following is a 209-amino-acid chain: Uridine kinase (209 aa).

An ATP-binding site is contributed by 12–19 (GGSASGKT).

This sequence belongs to the uridine kinase family.

Its subcellular location is the cytoplasm. The enzyme catalyses uridine + ATP = UMP + ADP + H(+). It catalyses the reaction cytidine + ATP = CMP + ADP + H(+). It functions in the pathway pyrimidine metabolism; CTP biosynthesis via salvage pathway; CTP from cytidine: step 1/3. It participates in pyrimidine metabolism; UMP biosynthesis via salvage pathway; UMP from uridine: step 1/1. The sequence is that of Uridine kinase from Chloroflexus aggregans (strain MD-66 / DSM 9485).